We begin with the raw amino-acid sequence, 388 residues long: Succinate--CoA ligase [ADP-forming] subunit beta (388 aa).

The region spanning 9 to 236 (KKLFAEHGVP…VAAVDPLEQK (228 aa)) is the ATP-grasp domain. ATP is bound by residues Lys45, 52 to 54 (GRG), Glu91, Ser94, and Glu99. 2 residues coordinate Mg(2+): Asn191 and Asp205. Substrate is bound by residues Asn256 and 318-320 (GIT).

It belongs to the succinate/malate CoA ligase beta subunit family. In terms of assembly, heterotetramer of two alpha and two beta subunits. It depends on Mg(2+) as a cofactor.

The enzyme catalyses succinate + ATP + CoA = succinyl-CoA + ADP + phosphate. The catalysed reaction is GTP + succinate + CoA = succinyl-CoA + GDP + phosphate. The protein operates within carbohydrate metabolism; tricarboxylic acid cycle; succinate from succinyl-CoA (ligase route): step 1/1. Functionally, succinyl-CoA synthetase functions in the citric acid cycle (TCA), coupling the hydrolysis of succinyl-CoA to the synthesis of either ATP or GTP and thus represents the only step of substrate-level phosphorylation in the TCA. The beta subunit provides nucleotide specificity of the enzyme and binds the substrate succinate, while the binding sites for coenzyme A and phosphate are found in the alpha subunit. This chain is Succinate--CoA ligase [ADP-forming] subunit beta, found in Frankia casuarinae (strain DSM 45818 / CECT 9043 / HFP020203 / CcI3).